Here is a 197-residue protein sequence, read N- to C-terminus: dITP/XTP pyrophosphatase (197 aa).

Residue 9 to 14 participates in substrate binding; that stretch reads TNNLNK. Mg(2+)-binding residues include E42 and D71. The Proton acceptor role is filled by D71. Substrate is bound by residues S72, 153-156, K176, and 181-182; these read FGYD and HR.

The protein belongs to the HAM1 NTPase family. Homodimer. It depends on Mg(2+) as a cofactor.

It catalyses the reaction XTP + H2O = XMP + diphosphate + H(+). The catalysed reaction is dITP + H2O = dIMP + diphosphate + H(+). It carries out the reaction ITP + H2O = IMP + diphosphate + H(+). In terms of biological role, pyrophosphatase that catalyzes the hydrolysis of nucleoside triphosphates to their monophosphate derivatives, with a high preference for the non-canonical purine nucleotides XTP (xanthosine triphosphate), dITP (deoxyinosine triphosphate) and ITP. Seems to function as a house-cleaning enzyme that removes non-canonical purine nucleotides from the nucleotide pool, thus preventing their incorporation into DNA/RNA and avoiding chromosomal lesions. This is dITP/XTP pyrophosphatase from Leptospira interrogans serogroup Icterohaemorrhagiae serovar copenhageni (strain Fiocruz L1-130).